The following is a 235-amino-acid chain: V-type proton ATPase subunit E2 (235 aa).

Position 1 is an N-acetylmethionine (Met1). Positions 8–64 form a coiled coil; that stretch reads KQIQQMVRFIRQEAEEKANEISISAEEEFNIERLQLLESAKRKLRQDYDRKLKQVDI.

It belongs to the V-ATPase E subunit family. As to quaternary structure, V-ATPase is a heteromultimeric enzyme composed of a peripheral catalytic V1 complex (components A to H) attached to an integral membrane V0 proton pore complex (components: a, c, c'', d and e).

It localises to the vacuole membrane. In terms of biological role, subunit of the peripheral V1 complex of vacuolar ATPase essential for assembly or catalytic function. V-ATPase is responsible for acidifying a variety of intracellular compartments in eukaryotic cells. This is V-type proton ATPase subunit E2 (VHA-E2) from Arabidopsis thaliana (Mouse-ear cress).